A 625-amino-acid polypeptide reads, in one-letter code: Grainyhead-like protein 2 homolog (625 aa).

3 disordered regions span residues 1–24 (MSQESDNNKRLVALVPMPSDPPFN), 82–112 (VSKASDSQEDQEKRNCLGTSEAQSNLSGGEN), and 428–453 (EERKQNRKKGKGQASQTQCNSSSDGK). A transcription activation region spans residues 1-93 (MSQESDNNKR…KASDSQEDQE (93 aa)). Composition is skewed to polar residues over residues 98-109 (LGTSEAQSNLSG) and 440-451 (QASQTQCNSSSD). One can recognise a Grh/CP2 DB domain in the interval 244–482 (SSGTFQYTLE…DLHSQPVLFI (239 aa)).

The protein belongs to the grh/CP2 family. Grainyhead subfamily. Homodimer, also forms heterodimers with GRHL1 or GRHL3. As to expression, expressed in keratinocytes (at protein level). Highly expressed in placenta, prostate, brain and kidney. Lower-level expression in a variety of epithelial tissues such as thymus, lung, salivary gland, mammary gland and digestive tract. Expressed in the cochlear. Expressed in corneal epithelial cells, but not in the endothelium or stroma.

It is found in the nucleus. Its subcellular location is the membrane. Functionally, transcription factor playing an important role in primary neurulation and in epithelial development. Binds directly to the consensus DNA sequence 5'-AACCGGTT-3' acting as an activator and repressor on distinct target genes. During embryogenesis, plays unique and cooperative roles with GRHL3 in establishing distinct zones of primary neurulation. Essential for closure 3 (rostral end of the forebrain), functions cooperatively with GRHL3 in closure 2 (forebrain/midbrain boundary) and posterior neuropore closure. Regulates epithelial morphogenesis acting as a target gene-associated transcriptional activator of apical junctional complex components. Up-regulates of CLDN3 and CLDN4, as well as of RAB25, which increases the CLDN4 protein and its localization at tight junctions. Comprises an essential component of the transcriptional machinery that establishes appropriate expression levels of CLDN4 and CDH1 in different types of epithelia. Exhibits functional redundancy with GRHL3 in epidermal morphogenetic events and epidermal wound repair. In lung, forms a regulatory loop with NKX2-1 that coordinates lung epithelial cell morphogenesis and differentiation. In keratinocytes, plays a role in telomerase activation during cellular proliferation, regulates TERT expression by binding to TERT promoter region and inhibiting DNA methylation at the 5'-CpG island, possibly by interfering with DNMT1 enzyme activity. In addition, impairs keratinocyte differentiation and epidermal function by inhibiting the expression of genes clustered at the epidermal differentiation complex (EDC) as well as GRHL1 and GRHL3 through epigenetic mechanisms. In Homo sapiens (Human), this protein is Grainyhead-like protein 2 homolog (GRHL2).